The following is a 244-amino-acid chain: Type III pantothenate kinase (244 aa).

Residue Asp11–Lys18 coordinates ATP. Residues Tyr90 and Gly97–Arg100 each bind substrate. Asp99 serves as the catalytic Proton acceptor. Asp119 is a K(+) binding site. An ATP-binding site is contributed by Thr122. Thr175 lines the substrate pocket.

The protein belongs to the type III pantothenate kinase family. Homodimer. NH4(+) serves as cofactor. It depends on K(+) as a cofactor.

It localises to the cytoplasm. The enzyme catalyses (R)-pantothenate + ATP = (R)-4'-phosphopantothenate + ADP + H(+). It functions in the pathway cofactor biosynthesis; coenzyme A biosynthesis; CoA from (R)-pantothenate: step 1/5. Catalyzes the phosphorylation of pantothenate (Pan), the first step in CoA biosynthesis. This is Type III pantothenate kinase from Marinomonas sp. (strain MWYL1).